The following is a 353-amino-acid chain: Photosystem II protein D1 (353 aa).

Residue T2 is modified to N-acetylthreonine. T2 carries the post-translational modification Phosphothreonine. Helical transmembrane passes span 29–46 (YVGW…TAVS), 118–133 (HFFL…EWEL), and 142–156 (WIAV…AATA). A chlorophyll a-binding site is contributed by H118. Y126 is a pheophytin a binding site. Positions 170 and 189 each coordinate [CaMn4O5] cluster. A helical membrane pass occupies residues 197–218 (FHMLGVAGVFGGSLFSAMHGSL). H198 provides a ligand contact to chlorophyll a. Residues H215 and 264-265 (SF) contribute to the a quinone site. A Fe cation-binding site is contributed by H215. H272 contacts Fe cation. The helical transmembrane segment at 274–288 (FLAAWPVVGIWFTAL) threads the bilayer. Residues H332, E333, D342, and A344 each contribute to the [CaMn4O5] cluster site. Residues 345 to 353 (SVEAPSING) constitute a propeptide that is removed on maturation.

Belongs to the reaction center PufL/M/PsbA/D family. PSII is composed of 1 copy each of membrane proteins PsbA, PsbB, PsbC, PsbD, PsbE, PsbF, PsbH, PsbI, PsbJ, PsbK, PsbL, PsbM, PsbT, PsbX, PsbY, PsbZ, Psb30/Ycf12, at least 3 peripheral proteins of the oxygen-evolving complex and a large number of cofactors. It forms dimeric complexes. It depends on The D1/D2 heterodimer binds P680, chlorophylls that are the primary electron donor of PSII, and subsequent electron acceptors. It shares a non-heme iron and each subunit binds pheophytin, quinone, additional chlorophylls, carotenoids and lipids. D1 provides most of the ligands for the Mn4-Ca-O5 cluster of the oxygen-evolving complex (OEC). There is also a Cl(-1) ion associated with D1 and D2, which is required for oxygen evolution. The PSII complex binds additional chlorophylls, carotenoids and specific lipids. as a cofactor. Tyr-161 forms a radical intermediate that is referred to as redox-active TyrZ, YZ or Y-Z. In terms of processing, C-terminally processed by CTPA; processing is essential to allow assembly of the oxygen-evolving complex and thus photosynthetic growth.

The protein resides in the plastid. It localises to the chloroplast thylakoid membrane. It catalyses the reaction 2 a plastoquinone + 4 hnu + 2 H2O = 2 a plastoquinol + O2. Photosystem II (PSII) is a light-driven water:plastoquinone oxidoreductase that uses light energy to abstract electrons from H(2)O, generating O(2) and a proton gradient subsequently used for ATP formation. It consists of a core antenna complex that captures photons, and an electron transfer chain that converts photonic excitation into a charge separation. The D1/D2 (PsbA/PsbD) reaction center heterodimer binds P680, the primary electron donor of PSII as well as several subsequent electron acceptors. This chain is Photosystem II protein D1, found in Tupiella akineta (Green alga).